The primary structure comprises 32 residues: ATP synthase subunit O, mitochondrial (32 aa).

The protein belongs to the ATPase delta chain family. In terms of assembly, F-type ATPases have 2 components, CF(1) - the catalytic core - and CF(0) - the membrane proton channel. CF(1) has five subunits: alpha(3), beta(3), gamma(1), delta(1), epsilon(1). CF(0) has three main subunits: a, b and c.

The protein resides in the mitochondrion. It localises to the mitochondrion inner membrane. Mitochondrial membrane ATP synthase (F(1)F(0) ATP synthase or Complex V) produces ATP from ADP in the presence of a proton gradient across the membrane which is generated by electron transport complexes of the respiratory chain. F-type ATPases consist of two structural domains, F(1) - containing the extramembraneous catalytic core and F(0) - containing the membrane proton channel, linked together by a central stalk and a peripheral stalk. During catalysis, ATP synthesis in the catalytic domain of F(1) is coupled via a rotary mechanism of the central stalk subunits to proton translocation. Part of the complex F(0) domain and the peripheric stalk, which acts as a stator to hold the catalytic alpha(3)beta(3) subcomplex and subunit a/ATP6 static relative to the rotary elements. The sequence is that of ATP synthase subunit O, mitochondrial from Spinacia oleracea (Spinach).